We begin with the raw amino-acid sequence, 197 residues long: 7-methyl-GTP pyrophosphatase (197 aa).

Residue Asp74 is the Proton acceptor of the active site.

The protein belongs to the Maf family. YceF subfamily. Requires a divalent metal cation as cofactor.

Its subcellular location is the cytoplasm. The catalysed reaction is N(7)-methyl-GTP + H2O = N(7)-methyl-GMP + diphosphate + H(+). In terms of biological role, nucleoside triphosphate pyrophosphatase that hydrolyzes 7-methyl-GTP (m(7)GTP). May have a dual role in cell division arrest and in preventing the incorporation of modified nucleotides into cellular nucleic acids. The protein is 7-methyl-GTP pyrophosphatase of Saccharophagus degradans (strain 2-40 / ATCC 43961 / DSM 17024).